Here is a 257-residue protein sequence, read N- to C-terminus: MKKLLFTTALLTGAIAFSTFSHAGEIADRVEKTKTLLVGTEGTYAPFTFHDKSGKLTGFDVEVIRKVAEKLGLKVEFKETQWDAMYAGLNAKRFDVIANQTNPSPERLKKYSFTTPYNYSGGVIVTKSSDNSIKSFEDLKGRKSAQSATSNWGKDAKAAGAQILVVDGLAQSLELIKQGRAEATINDKLAVLDYFKQHPNSGLKIAYDRGDKTPTAFAFLQGEDALITKFNQVLEALRQDGTLKQISIEWFGYDITQ.

The first 23 residues, 1–23 (MKKLLFTTALLTGAIAFSTFSHA), serve as a signal peptide directing secretion.

This sequence belongs to the bacterial solute-binding protein 3 family.

It is found in the periplasm. Probably part of a binding-protein-dependent transport system for an amino acid. The chain is Probable amino-acid ABC transporter-binding protein HI_1080 from Haemophilus influenzae (strain ATCC 51907 / DSM 11121 / KW20 / Rd).